A 232-amino-acid polypeptide reads, in one-letter code: Large ribosomal subunit protein uL10c (232 aa).

A chloroplast-targeting transit peptide spans 1-52 (MESTLFLSKPLPTTIKTTTHSLSSVYPNPFKPNNLTFPRTTHKHPTTTTITA).

Belongs to the universal ribosomal protein uL10 family. In terms of assembly, component of the chloroplast large ribosomal subunit (LSU). Mature 70S chloroplast ribosomes of higher plants consist of a small (30S) and a large (50S) subunit. The 30S small subunit contains 1 molecule of ribosomal RNA (16S rRNA) and 24 different proteins. The 50S large subunit contains 3 rRNA molecules (23S, 5S and 4.5S rRNA) and 33 different proteins.

The protein localises to the plastid. It localises to the chloroplast. Functionally, component of the chloroplast ribosome (chloro-ribosome), a dedicated translation machinery responsible for the synthesis of chloroplast genome-encoded proteins, including proteins of the transcription and translation machinery and components of the photosynthetic apparatus. The sequence is that of Large ribosomal subunit protein uL10c (RPL10) from Spinacia oleracea (Spinach).